The following is a 498-amino-acid chain: Lysine--tRNA ligase (498 aa).

Mg(2+) is bound by residues E407 and E414.

Belongs to the class-II aminoacyl-tRNA synthetase family. As to quaternary structure, homodimer. The cofactor is Mg(2+).

It localises to the cytoplasm. The enzyme catalyses tRNA(Lys) + L-lysine + ATP = L-lysyl-tRNA(Lys) + AMP + diphosphate. The chain is Lysine--tRNA ligase from Sinorhizobium medicae (strain WSM419) (Ensifer medicae).